The primary structure comprises 505 residues: Protein ERGIC-53-like (505 aa).

A signal peptide spans 1 to 25 (MLEIRGLSPSLCLLSLLLVLHGAER). At 26–438 (SQPPPRRRFE…SGWLLGSSTC (413 aa)) the chain is on the lumenal side. Residues 32–254 (RRFEYKLSFK…DVLSFLTFSL (223 aa)) form the L-type lectin-like domain. N-linked (GlcNAc...) asparagine glycosylation occurs at Asn-84. Cysteines 177 and 216 form a disulfide. A helical membrane pass occupies residues 439–459 (LHTSIFLFFLLLQTVGFFCYV). The Cytoplasmic segment spans residues 460-505 (NFSRQELDKRLQEYLSTGSLSLEPALPITRTIGVLRRQPISPSMQA).

It localises to the endoplasmic reticulum-Golgi intermediate compartment membrane. The chain is Protein ERGIC-53-like (Lman1l) from Mus musculus (Mouse).